The primary structure comprises 345 residues: 4-hydroxythreonine-4-phosphate dehydrogenase (345 aa).

Substrate is bound by residues H148 and T149. The a divalent metal cation site is built by H182, H227, and H282. Residues K290, N299, and R308 each coordinate substrate.

The protein belongs to the PdxA family. In terms of assembly, homodimer. Zn(2+) is required as a cofactor. Requires Mg(2+) as cofactor. Co(2+) serves as cofactor.

The protein localises to the cytoplasm. It catalyses the reaction 4-(phosphooxy)-L-threonine + NAD(+) = 3-amino-2-oxopropyl phosphate + CO2 + NADH. It functions in the pathway cofactor biosynthesis; pyridoxine 5'-phosphate biosynthesis; pyridoxine 5'-phosphate from D-erythrose 4-phosphate: step 4/5. Catalyzes the NAD(P)-dependent oxidation of 4-(phosphooxy)-L-threonine (HTP) into 2-amino-3-oxo-4-(phosphooxy)butyric acid which spontaneously decarboxylates to form 3-amino-2-oxopropyl phosphate (AHAP). This chain is 4-hydroxythreonine-4-phosphate dehydrogenase, found in Bradyrhizobium diazoefficiens (strain JCM 10833 / BCRC 13528 / IAM 13628 / NBRC 14792 / USDA 110).